The following is a 200-amino-acid chain: ATP-dependent Clp protease proteolytic subunit (200 aa).

Catalysis depends on serine 99, which acts as the Nucleophile. Residue histidine 124 is part of the active site.

This sequence belongs to the peptidase S14 family. As to quaternary structure, fourteen ClpP subunits assemble into 2 heptameric rings which stack back to back to give a disk-like structure with a central cavity, resembling the structure of eukaryotic proteasomes.

It localises to the cytoplasm. It carries out the reaction Hydrolysis of proteins to small peptides in the presence of ATP and magnesium. alpha-casein is the usual test substrate. In the absence of ATP, only oligopeptides shorter than five residues are hydrolyzed (such as succinyl-Leu-Tyr-|-NHMec, and Leu-Tyr-Leu-|-Tyr-Trp, in which cleavage of the -Tyr-|-Leu- and -Tyr-|-Trp bonds also occurs).. Cleaves peptides in various proteins in a process that requires ATP hydrolysis. Has a chymotrypsin-like activity. Plays a major role in the degradation of misfolded proteins. The protein is ATP-dependent Clp protease proteolytic subunit of Syntrophomonas wolfei subsp. wolfei (strain DSM 2245B / Goettingen).